The primary structure comprises 74 residues: Small cysteine-rich protein 8 (74 aa).

The N-terminal stretch at 1–21 is a signal peptide; that stretch reads MAAKFHLCLLLIILGTITVQG. Positions 22-31 are excised as a propeptide; it reads ARHPGKPHFF.

This sequence belongs to the Cnidaria small cysteine-rich protein (SCRiP) family. beta subfamily. Contains 4 disulfide bonds.

Its subcellular location is the secreted. It is found in the nematocyst. In terms of biological role, induces neurotoxic symptoms on zebrafish. Has also been claimed to be implied in calcification, but tests on homolog proteins suggest that proteins of this family have a neurotoxic function and not a calcification function. The polypeptide is Small cysteine-rich protein 8 (Orbicella faveolata (Mountainous star coral)).